The chain runs to 71 residues: Lysis protein (71 aa).

Positions 1–24 are disordered; that stretch reads MQQPSQPTRESTKKPVPFQHEEYP. A helical transmembrane segment spans residues 34 to 56; the sequence is LYVLICLAIFLSKFTNQLLASLL.

Belongs to the Leviviricetes lysis protein family.

It localises to the host cell inner membrane. The protein resides in the host cell outer membrane. Functionally, induces the formation of specific membrane adhesion sites between the inner and outer membranes, apparently leading to host cell lysis. Lysis may be performed via activation of host murein hydrolases. The protein is Lysis protein of Enterobacteria phage fr (Bacteriophage fr).